We begin with the raw amino-acid sequence, 459 residues long: Mitochondrial distribution and morphology protein 34 (459 aa).

The SMP-LTD domain occupies 1 to 190; the sequence is MSFRFNEAVF…LPSLIFNTSQ (190 aa). Residues 338–347 show a composition bias toward basic and acidic residues; that stretch reads RSNSNDDNAK. A disordered region spans residues 338 to 375; it reads RSNSNDDNAKPRRRKIKCKKTRTPSNLQSQGEQAVDDS. Residues 348 to 359 are compositionally biased toward basic residues; it reads PRRRKIKCKKTR.

This sequence belongs to the MDM34 family. As to quaternary structure, component of the ER-mitochondria encounter structure (ERMES) or MDM complex, composed of MMM1, MDM10, MDM12 and MDM34. Ubiquitinated by a SCF (SKP1-CUL1-F-box protein) E3 ubiquitin-protein ligase complex containing the F-box protein MDM30. Ubiquitination is important for mitochondrial integrity.

The protein resides in the mitochondrion outer membrane. Its function is as follows. Component of the ERMES/MDM complex, which serves as a molecular tether to connect the endoplasmic reticulum (ER) and mitochondria. Components of this complex are involved in the control of mitochondrial shape and protein biogenesis, and function in nonvesicular lipid trafficking between the ER and mitochondria. MDM34 is required for the interaction of the ER-resident membrane protein MMM1 and the outer mitochondrial membrane-resident beta-barrel protein MDM10. The polypeptide is Mitochondrial distribution and morphology protein 34 (Saccharomyces cerevisiae (strain YJM789) (Baker's yeast)).